The following is a 636-amino-acid chain: Chaperone protein DnaK (636 aa).

T198 is modified (phosphothreonine; by autocatalysis). Residues 600–636 (IAQQQAQAQQGSAEAGAQSQEDDVVDAEFEEVKDDKK) form a disordered region. A compositionally biased stretch (low complexity) spans 601–618 (AQQQAQAQQGSAEAGAQS). Acidic residues predominate over residues 619-636 (QEDDVVDAEFEEVKDDKK).

This sequence belongs to the heat shock protein 70 family.

In terms of biological role, acts as a chaperone. In Vibrio vulnificus (strain CMCP6), this protein is Chaperone protein DnaK.